A 664-amino-acid polypeptide reads, in one-letter code: DNA ligase (664 aa).

NAD(+)-binding positions include Asp32–Asp36 and Ser80–Leu81. Residue Lys122 is the N6-AMP-lysine intermediate of the active site. NAD(+) contacts are provided by Arg144, Glu178, and Lys314. Residues Cys407, Cys410, Cys423, and Cys429 each coordinate Zn(2+). Residues Ile587–Lys664 form the BRCT domain.

It belongs to the NAD-dependent DNA ligase family. LigA subfamily. The cofactor is Mg(2+). Mn(2+) is required as a cofactor.

The catalysed reaction is NAD(+) + (deoxyribonucleotide)n-3'-hydroxyl + 5'-phospho-(deoxyribonucleotide)m = (deoxyribonucleotide)n+m + AMP + beta-nicotinamide D-nucleotide.. Its function is as follows. DNA ligase that catalyzes the formation of phosphodiester linkages between 5'-phosphoryl and 3'-hydroxyl groups in double-stranded DNA using NAD as a coenzyme and as the energy source for the reaction. It is essential for DNA replication and repair of damaged DNA. This Clostridium botulinum (strain Langeland / NCTC 10281 / Type F) protein is DNA ligase.